A 218-amino-acid chain; its full sequence is Riboflavin synthase (218 aa).

Lumazine-binding repeat units lie at residues 1 to 97 (MFTG…LGGH) and 98 to 194 (LVSG…EKLI). 2,4-dihydroxypteridine contacts are provided by residues 4-6 (GII), 48-50 (CLT), 62-67 (DLSLET), 101-103 (GHV), Lys136, 145-147 (SLT), and 159-164 (TIVPHT).

As to quaternary structure, homotrimer.

The catalysed reaction is 2 6,7-dimethyl-8-(1-D-ribityl)lumazine + H(+) = 5-amino-6-(D-ribitylamino)uracil + riboflavin. It participates in cofactor biosynthesis; riboflavin biosynthesis; riboflavin from 2-hydroxy-3-oxobutyl phosphate and 5-amino-6-(D-ribitylamino)uracil: step 2/2. Catalyzes the dismutation of two molecules of 6,7-dimethyl-8-ribityllumazine, resulting in the formation of riboflavin and 5-amino-6-(D-ribitylamino)uracil. The chain is Riboflavin synthase (ribE) from Photobacterium leiognathi.